The primary structure comprises 962 residues: Putative primase C962R (962 aa).

An SF3 helicase domain is found at 607 to 775 (ELDARLWIMF…PDPNNSYEKK (169 aa)). 636-643 (GGGCNGKT) contacts ATP.

It belongs to the asfivirus helicase C962R family.

The chain is Putative primase C962R from African swine fever virus (isolate Pig/Kenya/KEN-50/1950) (ASFV).